Consider the following 1249-residue polypeptide: Cell adhesion molecule-related/down-regulated by oncogenes (1249 aa).

The signal sequence occupies residues 1–25 (MHSDPGPWHPLLCFLVLALSTSANS). Over 26–957 (DVTPRFTSKP…PSHSPTRNGD (932 aa)) the chain is Extracellular. 5 consecutive Ig-like C2-type domains span residues 29-113 (PRFT…KSVS), 120-212 (NDFE…LKLS), 217-307 (PRVD…VYYT), 314-400 (PSVS…ATVH), and 406-517 (PVIV…AYLT). 3 cysteine pairs are disulfide-bonded: C50–C98, C142–C192, and C244–C292. N-linked (GlcNAc...) asparagine glycans are attached at residues N181, N289, N296, N344, and N428. Cystine bridges form between C335–C382 and C427–C501. Disordered stretches follow at residues 528–585 (EDIT…SPPQ) and 671–690 (TSKE…PPIG). The span at 545 to 566 (SETRVPDHSQINEHKPEPRVTE) shows a compositional bias: basic and acidic residues. 3 consecutive Fibronectin type-III domains span residues 577 to 675 (APII…SKER), 721 to 815 (APDR…VAGY), and 826 to 923 (GPRI…TKAR). N870 carries N-linked (GlcNAc...) asparagine glycosylation. The tract at residues 929 to 952 (SEYPVLDLSTPSVPDRSSSPSHSP) is disordered. A compositionally biased stretch (low complexity) spans 937–952 (STPSVPDRSSSPSHSP). A helical transmembrane segment spans residues 958 to 978 (FLYVIVGCVLGGMVLILLAFI). Residues 979–1249 (AMCLLKNRQQ…DHPQLQTQEA (271 aa)) lie on the Cytoplasmic side of the membrane. Residues 1158 to 1202 (NCSEEIEEDQNEKETQLSANSVCPEEATQTGTEQHEGEDCTKTED) form a disordered region. The segment covering 1159–1168 (CSEEIEEDQN) has biased composition (acidic residues). The span at 1173-1189 (QLSANSVCPEEATQTGT) shows a compositional bias: polar residues. Residues 1190-1202 (EQHEGEDCTKTED) show a composition bias toward basic and acidic residues.

The protein localises to the cell membrane. Its function is as follows. Component of a cell-surface receptor complex that mediates cell-cell interactions between muscle precursor cells. Promotes differentiation of myogenic cells. The sequence is that of Cell adhesion molecule-related/down-regulated by oncogenes (cdon) from Xenopus laevis (African clawed frog).